A 463-amino-acid chain; its full sequence is A-type ATP synthase subunit B (463 aa).

It belongs to the ATPase alpha/beta chains family. As to quaternary structure, has multiple subunits with at least A(3), B(3), C, D, E, F, H, I and proteolipid K(x).

It is found in the cell membrane. Its function is as follows. Component of the A-type ATP synthase that produces ATP from ADP in the presence of a proton gradient across the membrane. The B chain is a regulatory subunit. In Desulfurococcus sp. (strain SY), this protein is A-type ATP synthase subunit B.